We begin with the raw amino-acid sequence, 40 residues long: Protein YneP (40 aa).

The polypeptide is Protein YneP (Escherichia coli (strain K12)).